The sequence spans 83 residues: RNA-binding protein Hfq (83 aa).

The Sm domain occupies Asp-11–Ile-71.

The protein belongs to the Hfq family. In terms of assembly, homohexamer.

Functionally, RNA chaperone that binds small regulatory RNA (sRNAs) and mRNAs to facilitate mRNA translational regulation in response to envelope stress, environmental stress and changes in metabolite concentrations. Also binds with high specificity to tRNAs. In Methylocella silvestris (strain DSM 15510 / CIP 108128 / LMG 27833 / NCIMB 13906 / BL2), this protein is RNA-binding protein Hfq.